The primary structure comprises 364 residues: MATDEFSSSTTPSYDYYDYTNESGLPPCDETDWDLSYSLLPVFYMIVFVLGLSGNGVVIFTVWKAKPKRRSADTYIGNLALADLAFVVTLPLWATYTALGFHWPFGSALCKLSSYLVLLNMFASVFCLTCLSFDRYLAIVHSLSSAKLRSRSSILVSLAVIWLFSGLLALPSLILRDTRVEGNNTICDLDFSGVSSKENENFWIGGLSILTTVPGFLLPLLLMTIFYCFIGGKVTMHFQNLKKEEQKKKRLLKIIITLVVVFAICWLPFHILKTIHFLDLMGFLELSCSTQNIIVSLHPYATCLAYINSCLNPFLYAFFDLRFRSQCFFFFGFKKALQGHLSNTSSSLSAQTQKSEIHSLATKV.

Topologically, residues 1 to 39 (MATDEFSSSTTPSYDYYDYTNESGLPPCDETDWDLSYSL) are extracellular. A glycan (N-linked (GlcNAc...) asparagine) is linked at Asn-21. 2 disulfides stabilise this stretch: Cys-28–Cys-288 and Cys-110–Cys-187. The chain crosses the membrane as a helical span at residues 40 to 60 (LPVFYMIVFVLGLSGNGVVIF). Residues 61–78 (TVWKAKPKRRSADTYIGN) lie on the Cytoplasmic side of the membrane. Residues 79–99 (LALADLAFVVTLPLWATYTAL) form a helical membrane-spanning segment. Residues 100 to 112 (GFHWPFGSALCKL) lie on the Extracellular side of the membrane. A helical membrane pass occupies residues 113–133 (SSYLVLLNMFASVFCLTCLSF). Residues 134-153 (DRYLAIVHSLSSAKLRSRSS) are Cytoplasmic-facing. A helical transmembrane segment spans residues 154-174 (ILVSLAVIWLFSGLLALPSLI). The Extracellular portion of the chain corresponds to 175–201 (LRDTRVEGNNTICDLDFSGVSSKENEN). N-linked (GlcNAc...) asparagine glycosylation occurs at Asn-183. A helical transmembrane segment spans residues 202 to 222 (FWIGGLSILTTVPGFLLPLLL). The Cytoplasmic segment spans residues 223–250 (MTIFYCFIGGKVTMHFQNLKKEEQKKKR). Residues 251–271 (LLKIIITLVVVFAICWLPFHI) form a helical membrane-spanning segment. Over 272-298 (LKTIHFLDLMGFLELSCSTQNIIVSLH) the chain is Extracellular. Residues 299 to 319 (PYATCLAYINSCLNPFLYAFF) traverse the membrane as a helical segment. Residues 320–364 (DLRFRSQCFFFFGFKKALQGHLSNTSSSLSAQTQKSEIHSLATKV) are Cytoplasmic-facing.

Belongs to the G-protein coupled receptor 1 family.

Its subcellular location is the cell membrane. In terms of biological role, g protein-coupled receptor for peptide hormones apelin (apln) and apelin receptor early endogenous ligand (apela), that plays a role in the regulation of normal cardiovascular function and fluid homeostasis. When acting as apelin receptor, activates both G(i) protein pathway that inhibits adenylate cyclase activity, and the beta-arrestin pathway that promotes internalization of the receptor. Also functions as mechanoreceptor that is activated by pathological stimuli in a G-protein-independent fashion to induce beta-arrestin signaling, hence eliciting cardiac hypertrophy. However, the presence of apelin ligand blunts cardiac hypertrophic induction from APLNR/APJ on response to pathological stimuli. Plays a key role in early development such as gastrulation, blood vessels formation and heart morphogenesis by acting as a receptor for apela hormone, promoting endoderm and mesendoderm cell migration and regulating the migration of cells fated to become myocardial progenitors, respectively. Promotes angioblast migration toward the embryonic midline, i.e. the position of the future vessel formation, during vasculogenesis. May promote sinus venosus (SV)-derived endothelial cells migration into the developing heart to promote coronary blood vessel development. Required for cardiovascular development, particularly for intersomitic vein angiogenesis. Plays also a role in various processes in adults such as regulation of blood vessel formation, blood pressure, heart contractility, and heart failure. Acts upstream of the i/o type of G-alpha proteins in the differentiation of endothelium, erythroid cells, myeloid cells and cardiomyocytes. This Xenopus tropicalis (Western clawed frog) protein is Apelin receptor (aplnr).